Consider the following 603-residue polypeptide: Elongation factor 4 (603 aa).

The tr-type G domain maps to 6–188 (KYVRNFSIIA…DIVKNVPAPI (183 aa)). GTP-binding positions include 18-23 (DHGKST) and 135-138 (NKID).

The protein belongs to the TRAFAC class translation factor GTPase superfamily. Classic translation factor GTPase family. LepA subfamily.

The protein localises to the cell membrane. It carries out the reaction GTP + H2O = GDP + phosphate + H(+). Required for accurate and efficient protein synthesis under certain stress conditions. May act as a fidelity factor of the translation reaction, by catalyzing a one-codon backward translocation of tRNAs on improperly translocated ribosomes. Back-translocation proceeds from a post-translocation (POST) complex to a pre-translocation (PRE) complex, thus giving elongation factor G a second chance to translocate the tRNAs correctly. Binds to ribosomes in a GTP-dependent manner. This Finegoldia magna (strain ATCC 29328 / DSM 20472 / WAL 2508) (Peptostreptococcus magnus) protein is Elongation factor 4.